The chain runs to 57 residues: Conotoxin Cal6.34 (57 aa).

A signal peptide spans 1 to 22 (MKLTCVLIVAVLILTACQVIAA). Intrachain disulfides connect Cys-26–Cys-37, Cys-29–Cys-43, and Cys-36–Cys-54.

This sequence belongs to the conotoxin O1 superfamily. As to expression, expressed by the venom duct.

It is found in the secreted. Its function is as follows. Probable neurotoxin. This Californiconus californicus (California cone) protein is Conotoxin Cal6.34.